Consider the following 464-residue polypeptide: MAARIGIFSVFVAVLLSISAFSSAQDLQIVNAERRIDLSSHIVKAFLTLKVENIGKDPAAEMLLAFPPTQIKNLAMVQALATTGKKKKKTYLPLDVKPTEQPDAPNDTGYYRVTFISPLGPGETVSLEVLYILTHSLEPFPVEITQSESQLVYYHDSAVILSPYHVKQQTTFIKTPSTRVESFTSIEPANRAGKEIKYGPYENRASYSYTPVIIHFENNSPFAVVEELVREIEISHWGSLQITENYRLTHGGARHKGVFSRVDYQSKRSVSGASSFNALLAVLPPRVNSVYYRDEIGNISTSHLRTGFRKSELEFEPRYPLFGGWSATFIIGYRVPLEDYLFEASDGRRYLNFTFGCPLVETIVNKLTIKVVLPEGSKDPSAVLPFTVNQELQVKYSYLDIVGRTVVVLQKDNVVPTHNVPFQVYYTFKPIYMLAEPFMLVSAFFLVFVASLAYVHIDLNIVRK.

An N-terminal signal peptide occupies residues 1 to 24 (MAARIGIFSVFVAVLLSISAFSSA). The Lumenal portion of the chain corresponds to 25–436 (QDLQIVNAER…TFKPIYMLAE (412 aa)). 2 N-linked (GlcNAc...) asparagine glycosylation sites follow: Asn-106 and Asn-298. Lys-310 participates in a covalent cross-link: Glycyl lysine isopeptide (Lys-Gly) (interchain with G-Cter in ubiquitin). N-linked (GlcNAc...) asparagine glycosylation occurs at Asn-352. The chain crosses the membrane as a helical span at residues 437-457 (PFMLVSAFFLVFVASLAYVHI). Residues 458–464 (DLNIVRK) lie on the Cytoplasmic side of the membrane.

Belongs to the OST1 family. Component of the oligosaccharyltransferase (OST) complex.

It is found in the endoplasmic reticulum membrane. It functions in the pathway protein modification; protein glycosylation. Functionally, subunit of the oligosaccharyl transferase (OST) complex that catalyzes the initial transfer of a defined glycan (Glc(3)Man(9)GlcNAc(2) in eukaryotes) from the lipid carrier dolichol-pyrophosphate to an asparagine residue within an Asn-X-Ser/Thr consensus motif in nascent polypeptide chains, the first step in protein N-glycosylation. N-glycosylation occurs cotranslationally and the complex associates with the Sec61 complex at the channel-forming translocon complex that mediates protein translocation across the endoplasmic reticulum (ER). All subunits are required for a maximal enzyme activity. This chain is Dolichyl-diphosphooligosaccharide--protein glycosyltransferase subunit 1B (OST1B), found in Arabidopsis thaliana (Mouse-ear cress).